We begin with the raw amino-acid sequence, 304 residues long: Non-specific ribonucleoside hydrolase RihC (304 aa).

Residue histidine 233 is part of the active site.

Belongs to the IUNH family. RihC subfamily.

Its function is as follows. Hydrolyzes both purine and pyrimidine ribonucleosides with a broad-substrate specificity. The chain is Non-specific ribonucleoside hydrolase RihC from Escherichia coli O8 (strain IAI1).